A 135-amino-acid polypeptide reads, in one-letter code: Glutaredoxin-C4 (135 aa).

Residues 32–132 (ADFVKKTISS…KLLGVSGNKE (101 aa)) form the Glutaredoxin domain. An intrachain disulfide couples cysteine 52 to cysteine 55.

The protein belongs to the glutaredoxin family. CPYC subfamily.

It localises to the cytoplasm. Functionally, has a glutathione-disulfide oxidoreductase activity in the presence of NADPH and glutathione reductase. Reduces low molecular weight disulfides and proteins. In Arabidopsis thaliana (Mouse-ear cress), this protein is Glutaredoxin-C4 (GRXC4).